The sequence spans 260 residues: Magnesium dechelatase SGRL, chloroplastic (260 aa).

Residues 1 to 45 (MACYIVPYYHHPVLSHPNREIFSHRHHHHHRFCNNLLNRRISVPR) constitute a chloroplast transit peptide.

Belongs to the staygreen family. As to quaternary structure, interacts with the light harvesting complex II (LHCII). Interacts with the chlorophyll catabolic enzymes (CCEs) NYC1, NOL, PAO and RCCR. As to expression, expressed in cotyledons, pollen and young leaves.

The protein resides in the plastid. The protein localises to the chloroplast thylakoid. The enzyme catalyses chlorophyllide a + 2 H(+) = pheophorbide a + Mg(2+). In terms of biological role, magnesium chelatase involved in chlorophyll a degradation in the chlorophyll-protein complexes of photosystem I (PSI) and photosystem II (PSII). Contributes to the degradation of PSI and PSII in the thylakoid membranes. Recombinant SGRL possesses high dechelating activity against chlorophyllide a, very low activity against chlorophyll a, and no activity against chlorophyll b. Contributes to abiotic stress-induced chlorophyll degradation and leaf yellowing during vegetative plant growth. This chain is Magnesium dechelatase SGRL, chloroplastic, found in Arabidopsis thaliana (Mouse-ear cress).